Consider the following 114-residue polypeptide: uncharacterized protein (114 aa).

Residues Cys-40, Cys-106, and Cys-108 each contribute to the Fe cation site.

It belongs to the HesB/IscA family. Ycf83 subfamily.

It is found in the plastid. The protein localises to the chloroplast. This is an uncharacterized protein from Pyropia yezoensis (Susabi-nori).